Consider the following 440-residue polypeptide: MFLAQEIIRKKRDGHALSDEEIRFFINGIRDNTISEGQIAALAMTIFFHDMTMPERVSLTMAMRDSGSVLDWKSLNLNGPIVDKHSTGGVGDVTSLMLGPMVAACGGYVPMISGRGLGHTGGTLDKLEAIPGFDIFPDDNRFREIIQDVGVAIIGQTSSLAPADKRFYATRDITATVDSIPLITGSILAKKLAEGLDALVMDVKVGSGAFMPTYELSEALAEAIVGVANGAGVRTTALLTDMNQVLASSAGNAVEVREAVQFLTGEYRNPRLFDVTMALCVEMLISGQLAKDDAEARAKLQAVLDNGKAAEVFGRMVAAQKGPSDFVENYDKYLPTAMLSKAVYADTEGFISAMDTRALGMAVVSMGGGRRQASDTIDYSVGFTDMARLGDSIDGQRPLAVIHAKDETSWQEAAKAVKAAIILDDKAPASTPSVYRRITE.

It belongs to the thymidine/pyrimidine-nucleoside phosphorylase family. Homodimer.

It catalyses the reaction thymidine + phosphate = 2-deoxy-alpha-D-ribose 1-phosphate + thymine. Its pathway is pyrimidine metabolism; dTMP biosynthesis via salvage pathway; dTMP from thymine: step 1/2. Its function is as follows. The enzymes which catalyze the reversible phosphorolysis of pyrimidine nucleosides are involved in the degradation of these compounds and in their utilization as carbon and energy sources, or in the rescue of pyrimidine bases for nucleotide synthesis. This chain is Thymidine phosphorylase, found in Salmonella schwarzengrund (strain CVM19633).